The primary structure comprises 1892 residues: Sodium channel protein type 4 subunit alpha A (1892 aa).

Topologically, residues 1–125 (MATILPPPGT…RGAIKILIHS (125 aa)) are cytoplasmic. The interval 34–54 (APKAGAHEEEEPPTPNPDLEA) is disordered. Residues 107-433 (ILSPFSLVRR…VVAMAYDEQN (327 aa)) form an I repeat. Residues 126–144 (LFSTLIMITILSNCVFMTM) form a helical membrane-spanning segment. At 145–151 (SNPPAWS) the chain is on the extracellular side. The helical transmembrane segment at 152 to 172 (KTVEYVFTGIYTFEATVKVLS) threads the bilayer. Topologically, residues 173–186 (RGFCVGPFTFLRDP) are cytoplasmic. Residues 187–204 (WNWLDFMVISMAYITEFV) form a helical membrane-spanning segment. At 205 to 210 (DLGNVS) the chain is on the extracellular side. An N-linked (GlcNAc...) asparagine glycan is attached at Asn-208. The helical transmembrane segment at 211–227 (ALRTFRVLRALKTITVI) threads the bilayer. Over 228-246 (PGLKTIVAALIQSVKKMVD) the chain is Cytoplasmic. A helical membrane pass occupies residues 247 to 266 (VMILTVFALAVFALVGLQLF). At 267–370 (MGNLRHKCIR…PNYGYTSFDS (104 aa)) the chain is on the extracellular side. A disulfide bridge connects residues Cys-274 and Cys-339. 3 N-linked (GlcNAc...) asparagine glycosylation sites follow: Asn-281, Asn-294, and Asn-341. A disulfide bridge connects residues Cys-348 and Cys-354. The segment at residues 371-395 (FGWAFLALFRLMTQDNWESLFQLTL) is an intramembrane region (pore-forming). Residues 396 to 402 (RAAGQTY) lie on the Extracellular side of the membrane. The chain crosses the membrane as a helical span at residues 403-423 (MLFFVVVIFLGSFYLINLILA). At 424-612 (VVAMAYDEQN…KWVHFVVMDP (189 aa)) the chain is on the cytoplasmic side. One copy of the II repeat lies at 594-866 (CCEKWVVFKK…QIAIGRITRG (273 aa)). The helical transmembrane segment at 613 to 631 (FVDLAITICIVLNTLFMAM) threads the bilayer. Residues 632–642 (EHYPMTEEFDY) are Extracellular-facing. Residues 643–662 (MLSVGNLVFTGIFAAEMFFK) traverse the membrane as a helical segment. The Cytoplasmic portion of the chain corresponds to 663–676 (LIAMDPYYYFQVGW). The helical transmembrane segment at 677–696 (NIFDSIIVTLSLVELGLANV) threads the bilayer. Residues 697-698 (QG) are Extracellular-facing. A helical transmembrane segment spans residues 699–716 (LSVLRSFRLLRVFKLAKS). Over 717–732 (WPTLNMLIKIIGNSVG) the chain is Cytoplasmic. The chain crosses the membrane as a helical span at residues 733–751 (ALGNLTLVLAIIVFIFAVV). Topologically, residues 752 to 780 (GMQLFGKSYKDCVCKISSDCELPRWHMND) are extracellular. Cys-765 and Cys-771 form a disulfide bridge. The pore-forming intramembrane region spans 781–801 (FFHSFLIVFRILCGEWIETMW). Over 802-812 (DCMEVAGAGMC) the chain is Extracellular. Cysteines 803 and 812 form a disulfide. The chain crosses the membrane as a helical span at residues 813–831 (LVVFMMVMVIGNLVVLNLF). Topologically, residues 832–1071 (LALLLSSFSG…TCFTIVEHDW (240 aa)) are cytoplasmic. 2 disordered regions span residues 884–905 (REPQ…TEGM) and 945–982 (LGES…GVED). Residues 948-971 (SDSENPSEDDDDQEDDVDSEVTCE) are compositionally biased toward acidic residues. Residues 1052 to 1366 (KGKKWWNLRK…KKYYEAMKKL (315 aa)) form an III repeat. The helical transmembrane segment at 1072-1089 (FETFIIFMILLSSGALAF) threads the bilayer. The Extracellular portion of the chain corresponds to 1090–1102 (EDIYIERRRTVKI). A helical transmembrane segment spans residues 1103 to 1121 (VLEFADKVFTFIFVIEMLL). Over 1122–1135 (KWVAYGFKTYFTNA) the chain is Cytoplasmic. A helical transmembrane segment spans residues 1136–1154 (WCWLDFFIVDISLISLSAN). Over 1155 to 1162 (LMGFSDLG) the chain is Extracellular. The helical transmembrane segment at 1163-1181 (PIKSLRTLRALRPLRALSR) threads the bilayer. The Cytoplasmic portion of the chain corresponds to 1182–1198 (FEGMRVVVNALIGAIPS). A helical transmembrane segment spans residues 1199 to 1218 (IFNVLLVCLIFWLIFSIMGV). Residues 1219 to 1270 (NLFAGKFYRCINTTTAELFPISVVNNKSDCVALQEATQEARWVNVKVNYDNV) are Extracellular-facing. A disulfide bridge connects residues Cys-1228 and Cys-1248. Asn-1230 and Asn-1244 each carry an N-linked (GlcNAc...) asparagine glycan. Residues 1271–1292 (AKGYLSLLQIATFKGWMDIMYP) constitute an intramembrane region (pore-forming). Topologically, residues 1293-1309 (AVDSREVEEQPSYEINL) are extracellular. Residues 1310–1331 (YMYIYFVIFIIFGSFFTLNLFI) form a helical membrane-spanning segment. At 1332 to 1394 (GVIIDNFNQQ…LVFDFISQQF (63 aa)) the chain is on the cytoplasmic side. The important for rapid channel inactivation stretch occupies residues 1350-1352 (IFM). The stretch at 1375–1673 (IPRPANLIQG…WEKFDTGGTQ (299 aa)) is one IV repeat. Residues 1395–1412 (FDIFIMVLICLNMVTMMV) form a helical membrane-spanning segment. The Extracellular segment spans residues 1413-1423 (ETDDQSPAKED). A helical membrane pass occupies residues 1424–1442 (FLFKVNVAFIVVFTGECTL). The Cytoplasmic portion of the chain corresponds to 1443-1454 (KLFALRHYFFTN). Residues 1455–1472 (GWNIFDFIVVILSIAGTM) form a helical membrane-spanning segment. Residues 1473–1485 (LSDIIEKYFVSPT) lie on the Extracellular side of the membrane. The chain crosses the membrane as a helical span at residues 1486-1502 (LFRVIRLARIGRILRLI). Residues 1503–1521 (KGARGIRTLLFALMMSLPA) lie on the Cytoplasmic side of the membrane. The helical transmembrane segment at 1522-1539 (LFNIGLLLFLIMFIFSIF) threads the bilayer. The Extracellular segment spans residues 1540-1561 (GMSNFAYVKKEAGINDMFNFET). Residues 1562–1584 (FGSSIICLFQITTSAGWDTLLLP) constitute an intramembrane region (pore-forming). Residues 1585–1614 (MLNKEPPDCDPAFENPGTDVKGNCGNPMMG) are Extracellular-facing. Cysteines 1593 and 1608 form a disulfide. Residues 1615–1637 (MVFFCSYIIISFLVVVNMYIAII) traverse the membrane as a helical segment. Residues 1638 to 1892 (LENFNVAQEE…TQTILRETNV (255 aa)) lie on the Cytoplasmic side of the membrane. The 30-residue stretch at 1767-1796 (EDMAAVVIQRAYRNHLHKRGIHHAAYIQRS) folds into the IQ domain. A disordered region spans residues 1836 to 1856 (RRRPDPQTRCSGARCSPEPPE).

This sequence belongs to the sodium channel (TC 1.A.1.10) family. Nav1.4/SCN4A subfamily. Voltage-gated sodium (Nav) channels consist of an ion-conducting alpha subunit which is functional on its own associated with regulatory beta subunits.

The protein localises to the cell membrane. The catalysed reaction is Na(+)(in) = Na(+)(out). Functionally, pore-forming subunit of a voltage-gated sodium (Nav) channel that directly mediates the depolarizing phase of action potentials in excitable membranes. Navs, also called VGSCs (voltage-gated sodium channels) or VDSCs (voltage-dependent sodium channels), operate by switching between closed and open conformations depending on the voltage difference across the membrane. In the open conformation they allow Na(+) ions to selectively pass through the pore, along their electrochemical gradient. The influx of Na+ ions provokes membrane depolarization, initiating the propagation of electrical signals throughout cells and tissues. This chain is Sodium channel protein type 4 subunit alpha A (scn4aa), found in Takifugu rubripes (Japanese pufferfish).